The chain runs to 83 residues: U4-theraphotoxin-Hhn1x (83 aa).

The N-terminal stretch at 1–20 is a signal peptide; sequence MTLIAILTCAAALVLHTTAA. Residues 21 to 46 constitute a propeptide that is removed on maturation; sequence EELEAESQLMEVGMPDTELEAVDEER. 3 disulfide bridges follow: C50–C64, C54–C75, and C69–C80.

The protein belongs to the neurotoxin 12 (Hwtx-2) family. 02 (Hwtx-2) subfamily. In terms of tissue distribution, expressed by the venom gland.

It is found in the secreted. Postsynaptic neurotoxin. This Cyriopagopus hainanus (Chinese bird spider) protein is U4-theraphotoxin-Hhn1x.